Reading from the N-terminus, the 329-residue chain is N-acetyl-gamma-glutamyl-phosphate reductase (329 aa).

Residue Cys-155 is part of the active site.

It belongs to the NAGSA dehydrogenase family. Type 1 subfamily.

It localises to the cytoplasm. The catalysed reaction is N-acetyl-L-glutamate 5-semialdehyde + phosphate + NADP(+) = N-acetyl-L-glutamyl 5-phosphate + NADPH + H(+). Its pathway is amino-acid biosynthesis; L-arginine biosynthesis; N(2)-acetyl-L-ornithine from L-glutamate: step 3/4. In terms of biological role, catalyzes the NADPH-dependent reduction of N-acetyl-5-glutamyl phosphate to yield N-acetyl-L-glutamate 5-semialdehyde. The protein is N-acetyl-gamma-glutamyl-phosphate reductase of Shewanella piezotolerans (strain WP3 / JCM 13877).